Here is a 747-residue protein sequence, read N- to C-terminus: DNA ligase (747 aa).

Residues 113-117 (DRAYD), 161-162 (SI), and glutamate 190 contribute to the NAD(+) site. The N6-AMP-lysine intermediate role is filled by lysine 192. Residues arginine 213, glutamate 249, lysine 364, and lysine 388 each contribute to the NAD(+) site. Positions 479, 482, 495, and 501 each coordinate Zn(2+). The region spanning 660-747 (TTNAPLSDLT…EHDDTLTWPP (88 aa)) is the BRCT domain.

Belongs to the NAD-dependent DNA ligase family. LigA subfamily. Mg(2+) serves as cofactor. It depends on Mn(2+) as a cofactor.

The catalysed reaction is NAD(+) + (deoxyribonucleotide)n-3'-hydroxyl + 5'-phospho-(deoxyribonucleotide)m = (deoxyribonucleotide)n+m + AMP + beta-nicotinamide D-nucleotide.. Functionally, DNA ligase that catalyzes the formation of phosphodiester linkages between 5'-phosphoryl and 3'-hydroxyl groups in double-stranded DNA using NAD as a coenzyme and as the energy source for the reaction. It is essential for DNA replication and repair of damaged DNA. The sequence is that of DNA ligase from Haloquadratum walsbyi (strain DSM 16790 / HBSQ001).